Consider the following 566-residue polypeptide: Protein downstream neighbor of Son (566 aa).

Residues 1–110 are disordered; it reads MALSVPGYSP…QPEAPVPFLD (110 aa). Residues serine 28 and serine 34 each carry the phosphoserine modification. The segment covering 62–72 has biased composition (gly residues); that stretch reads GGRGGGSGGGP. Over residues 73 to 82 the composition is skewed to low complexity; sequence AAARRNPFAR.

Belongs to the DONSON family. As to quaternary structure, component of the replisome complex composed of at least DONSON, MCM2, MCM7, PCNA and TICRR; interaction at least with PCNA occurs during DNA replication. Expressed in the brain, with higher levels in prenatal compared to adult brain.

The protein localises to the nucleus. Its function is as follows. Replisome component that maintains genome stability by protecting stalled or damaged replication forks. After the induction of replication stress, required for the stabilization of stalled replication forks, the efficient activation of the intra-S-phase and G/2M cell-cycle checkpoints and the maintenance of genome stability. The sequence is that of Protein downstream neighbor of Son (DONSON) from Homo sapiens (Human).